Here is a 1070-residue protein sequence, read N- to C-terminus: DNA-directed RNA polymerase subunit beta (1070 aa).

Belongs to the RNA polymerase beta chain family. In plastids the minimal PEP RNA polymerase catalytic core is composed of four subunits: alpha, beta, beta', and beta''. When a (nuclear-encoded) sigma factor is associated with the core the holoenzyme is formed, which can initiate transcription.

It is found in the plastid. It localises to the chloroplast. It catalyses the reaction RNA(n) + a ribonucleoside 5'-triphosphate = RNA(n+1) + diphosphate. Its function is as follows. DNA-dependent RNA polymerase catalyzes the transcription of DNA into RNA using the four ribonucleoside triphosphates as substrates. This chain is DNA-directed RNA polymerase subunit beta, found in Vitis vinifera (Grape).